Here is a 777-residue protein sequence, read N- to C-terminus: Endonuclease MutS2 (777 aa).

Residue 328–335 participates in ATP binding; the sequence is GPNTGGKT. The region spanning 702–777 is the Smr domain; that stretch reads LDLRGKRYEE…GSGATIVIFK (76 aa).

The protein belongs to the DNA mismatch repair MutS family. MutS2 subfamily. As to quaternary structure, homodimer. Binds to stalled ribosomes, contacting rRNA.

Its function is as follows. Endonuclease that is involved in the suppression of homologous recombination and thus may have a key role in the control of bacterial genetic diversity. Acts as a ribosome collision sensor, splitting the ribosome into its 2 subunits. Detects stalled/collided 70S ribosomes which it binds and splits by an ATP-hydrolysis driven conformational change. Acts upstream of the ribosome quality control system (RQC), a ribosome-associated complex that mediates the extraction of incompletely synthesized nascent chains from stalled ribosomes and their subsequent degradation. Probably generates substrates for RQC. This Streptococcus gordonii (strain Challis / ATCC 35105 / BCRC 15272 / CH1 / DL1 / V288) protein is Endonuclease MutS2.